The primary structure comprises 824 residues: MEEKYIPRNVEEKWQKIWEENKTYKVTEDPSKPKYYLLEMFPYPSGRIHMGHVRNYSIGDVVGRFKRLRGFNVLHPMGWDAFGMPAENAAIQHKSHPAKWTYENIAYMRSQLKKMGLSYDWDRELATCDLDYYKWEQKVFLEMYEKGLAYKKTSYVNWCPKCETVLANEQVEDGACWRCDSEVTQKELEQWFFRITDYAEELLEYTEKLPGWPERVLTMQRNWIGKSYGCEIDFPVEGSLAKIKVFTTRQDTLYGATFMSLAPEHPMALELTTPDRRAEVEAFIDKVKKTDKIKRTAEDFEKEGVFTGSYCINPVTNRRMPVFLANFVLLDYGTGAVMAVPTHDQRDFEFARKYDLPLQVVIQPEGETLDPAAMATAYTEVGTMVNSGTFDGLRSDEAKEKIADYLAKEGIGTKTVNFRLRDWGISRQRYWGNPIPVIYCDICGVVPVPEKDLPVVLPMDVEFTGEGGSPLKKLDSFVNVPCPQCGQMARRETDTMDTFVQSSWYFLRYCCPDFAAGPIDKARAEYWMSVDQYIGGIEHAVLHLLYARFFTKALRDLGYVTVDEPFTNLLTQGMVIKDGAKMSKSKGNVVDPDALINRYGADTARLFSLFAAPPEKDLDWSDQGVDGSYRFLSRVWRLVCDLLPFVGKGGAVDSASLSDDARGLRRAVHKTIRKVTDDIDERFHFNTAIAAIMELVNAIYAFEPKNAPENGPVLTEAIESVVIMLSPFVPHVTEELWEALGHQGGVEAAGWPSFDPSAAVDEEFLIVVQVNGKLRGKVTVATDATEEQVKAAAFADEKVKPWIEGKQLRKAIYVPGKLLNIVVG.

The 'HIGH' region signature appears at Pro-42–His-52. The short motif at Lys-581–Ser-585 is the 'KMSKS' region element. Lys-584 contacts ATP.

This sequence belongs to the class-I aminoacyl-tRNA synthetase family.

The protein resides in the cytoplasm. It carries out the reaction tRNA(Leu) + L-leucine + ATP = L-leucyl-tRNA(Leu) + AMP + diphosphate. The chain is Leucine--tRNA ligase from Geobacter metallireducens (strain ATCC 53774 / DSM 7210 / GS-15).